Here is a 326-residue protein sequence, read N- to C-terminus: Acetyl-coenzyme A carboxylase carboxyl transferase subunit beta (326 aa).

The CoA carboxyltransferase N-terminal domain maps to 25–308 (LWVKCPASGE…RRDDRSTLQL (284 aa)). The disordered stretch occupies residues 298–326 (RRRDDRSTLQLTPPKTHAPKPPEPKVKPD). Positions 317–326 (KPPEPKVKPD) are enriched in basic and acidic residues.

It belongs to the AccD/PCCB family. In terms of assembly, acetyl-CoA carboxylase is a heterohexamer composed of biotin carboxyl carrier protein (AccB), biotin carboxylase (AccC) and two subunits each of ACCase subunit alpha (AccA) and ACCase subunit beta (AccD).

The protein localises to the cytoplasm. It catalyses the reaction N(6)-carboxybiotinyl-L-lysyl-[protein] + acetyl-CoA = N(6)-biotinyl-L-lysyl-[protein] + malonyl-CoA. It functions in the pathway lipid metabolism; malonyl-CoA biosynthesis; malonyl-CoA from acetyl-CoA: step 1/1. In terms of biological role, component of the acetyl coenzyme A carboxylase (ACC) complex. Biotin carboxylase (BC) catalyzes the carboxylation of biotin on its carrier protein (BCCP) and then the CO(2) group is transferred by the transcarboxylase to acetyl-CoA to form malonyl-CoA. The polypeptide is Acetyl-coenzyme A carboxylase carboxyl transferase subunit beta (Hyphomonas neptunium (strain ATCC 15444)).